Reading from the N-terminus, the 86-residue chain is MGKTKVVGIAGRYGTRYGSTLRKKIRDILEKRYSPHTCPFCGHKGKVYRLSTGVWACKKCGAKWAGGAYMPKTESAKLFSDIIIRE.

Residues Cys38–Cys60 form a C4-type zinc finger.

Belongs to the eukaryotic ribosomal protein eL43 family. Requires Zn(2+) as cofactor.

This chain is Large ribosomal subunit protein eL43, found in Desulfurococcus amylolyticus (strain DSM 18924 / JCM 16383 / VKM B-2413 / 1221n) (Desulfurococcus kamchatkensis).